Here is an 821-residue protein sequence, read N- to C-terminus: Ent-pimara-8(14),15-diene synthase (821 aa).

Mg(2+) is bound by residues aspartate 556, aspartate 560, asparagine 701, threonine 705, and glutamate 709. Positions 556 to 560 (DDFFD) match the DDXXD motif motif.

Belongs to the terpene synthase family. The cofactor is Mg(2+). As to expression, highly expressed in roots, at intermediate levels in stems and at lower levels in leaves.

The enzyme catalyses ent-copalyl diphosphate = ent-pimara-8(14),15-diene + diphosphate. The protein operates within secondary metabolite biosynthesis; terpenoid biosynthesis. Functionally, involved in the biosynthesis of ent-kaurene diterpenoids natural products. Catalyzes the conversion of ent-copalyl diphosphate to ent-pimara-8(14),15-diene. This chain is Ent-pimara-8(14),15-diene synthase, found in Oryza sativa subsp. japonica (Rice).